An 875-amino-acid chain; its full sequence is Lysine-specific demethylase JMJ26 (875 aa).

The disordered stretch occupies residues 31–103 (KPVEATSLSS…RSSVKKRATT (73 aa)). Positions 62–69 (RKRSKADE) match the Nuclear localization signal motif. Residues 79 to 93 (KCDDENKCEENEKKQ) are compositionally biased toward basic and acidic residues. 12 residues coordinate Zn(2+): Cys-193, Cys-196, Cys-207, Cys-210, Cys-216, Cys-219, Cys-236, Cys-239, Cys-322, Cys-325, Cys-339, and Cys-347. Residues 193–240 (CHQCSKGERRYLFICTFCEVRLYCFPCIKKWYPHLSTDDILEKCPFCR) form an RING-type; degenerate zinc finger. A B box-type; degenerate zinc finger spans residues 317-347 (EERVFCNHCATSIVDLHRSCPKCSYELCLNC). The region spanning 614–837 (PRSGILNIAT…ECLRLTDEFR (224 aa)) is the JmjC domain. Residues His-658, Asp-660, and His-805 each contribute to the Fe cation site.

It belongs to the JARID1 histone demethylase family. Requires Fe(2+) as cofactor. As to expression, expressed in inflorescences, roots, siliques, leaves and stems.

It is found in the nucleus. Its function is as follows. May function as histone H3 lysine demethylase and be involved in regulation of gene expression. This chain is Lysine-specific demethylase JMJ26, found in Arabidopsis thaliana (Mouse-ear cress).